Consider the following 1211-residue polypeptide: DNA-directed RNA polymerase subunit beta' (1211 aa).

Residues cysteine 60, cysteine 62, cysteine 75, and cysteine 78 each coordinate Zn(2+). Positions 450, 452, and 454 each coordinate Mg(2+). Residues cysteine 819, cysteine 893, cysteine 900, and cysteine 903 each contribute to the Zn(2+) site.

Belongs to the RNA polymerase beta' chain family. In terms of assembly, the RNAP catalytic core consists of 2 alpha, 1 beta, 1 beta' and 1 omega subunit. When a sigma factor is associated with the core the holoenzyme is formed, which can initiate transcription. Mg(2+) serves as cofactor. It depends on Zn(2+) as a cofactor.

It catalyses the reaction RNA(n) + a ribonucleoside 5'-triphosphate = RNA(n+1) + diphosphate. DNA-dependent RNA polymerase catalyzes the transcription of DNA into RNA using the four ribonucleoside triphosphates as substrates. This is DNA-directed RNA polymerase subunit beta' from Streptococcus equi subsp. zooepidemicus (strain H70).